A 221-amino-acid polypeptide reads, in one-letter code: Probable septum site-determining protein MinC (221 aa).

It belongs to the MinC family. As to quaternary structure, interacts with MinD and FtsZ.

In terms of biological role, cell division inhibitor that blocks the formation of polar Z ring septums. Rapidly oscillates between the poles of the cell to destabilize FtsZ filaments that have formed before they mature into polar Z rings. Prevents FtsZ polymerization. This is Probable septum site-determining protein MinC from Shewanella frigidimarina (strain NCIMB 400).